Consider the following 20-residue polypeptide: Neurotoxin BmK 18(2) (20 aa).

Positions 2–20 (RDAYIAEDYDCVYHCARDA) constitute an LCN-type CS-alpha/beta domain.

Belongs to the long (4 C-C) scorpion toxin superfamily. Sodium channel inhibitor family. Alpha subfamily. In terms of tissue distribution, expressed by the venom gland.

It localises to the secreted. In terms of biological role, binds to sodium channels (Nav) and inhibits the inactivation of the activated channels, thereby blocking neuronal transmission. The sequence is that of Neurotoxin BmK 18(2) from Olivierus martensii (Manchurian scorpion).